The chain runs to 275 residues: 2-dehydro-3-deoxyphosphooctonate aldolase (275 aa).

Belongs to the KdsA family.

The protein resides in the cytoplasm. It carries out the reaction D-arabinose 5-phosphate + phosphoenolpyruvate + H2O = 3-deoxy-alpha-D-manno-2-octulosonate-8-phosphate + phosphate. It participates in carbohydrate biosynthesis; 3-deoxy-D-manno-octulosonate biosynthesis; 3-deoxy-D-manno-octulosonate from D-ribulose 5-phosphate: step 2/3. It functions in the pathway bacterial outer membrane biogenesis; lipopolysaccharide biosynthesis. The polypeptide is 2-dehydro-3-deoxyphosphooctonate aldolase (Francisella philomiragia subsp. philomiragia (strain ATCC 25017 / CCUG 19701 / FSC 153 / O#319-036)).